The primary structure comprises 118 residues: Small nuclear ribonucleoprotein Sm D2 (118 aa).

The tract at residues 1–31 is disordered; it reads MSLLNKPKSEMTPEELQKREEEEFNTGPLSV. At S2 the chain carries N-acetylserine. Residues K6 and K8 each participate in a glycyl lysine isopeptide (Lys-Gly) (interchain with G-Cter in SUMO2) cross-link. Over residues 7-21 the composition is skewed to basic and acidic residues; it reads PKSEMTPEELQKREE. The residue at position 9 (S9) is a Phosphoserine. T12 bears the Phosphothreonine mark. A Sm domain is found at 29-115; it reads LSVLTQSVKN…VIVVLRNPLI (87 aa).

This sequence belongs to the snRNP core protein family. As to quaternary structure, core component of the spliceosomal U1, U2, U4 and U5 small nuclear ribonucleoproteins (snRNPs), the building blocks of the spliceosome. Most spliceosomal snRNPs contain a common set of Sm proteins, SNRPB, SNRPD1, SNRPD2, SNRPD3, SNRPE, SNRPF and SNRPG that assemble in a heptameric protein ring on the Sm site of the small nuclear RNA to form the core snRNP. Component of the U1 snRNP. The U1 snRNP is composed of the U1 snRNA and the 7 core Sm proteins SNRPB, SNRPD1, SNRPD2, SNRPD3, SNRPE, SNRPF and SNRPG, and at least three U1 snRNP-specific proteins SNRNP70/U1-70K, SNRPA/U1-A and SNRPC/U1-C. Component of the U4/U6-U5 tri-snRNP complex composed of the U4, U6 and U5 snRNAs and at least PRPF3, PRPF4, PRPF6, PRPF8, PRPF31, SNRNP200, TXNL4A, SNRNP40, SNRPB, SNRPD1, SNRPD2, SNRPD3, SNRPE, SNRPF, SNRPG, DDX23, CD2BP2, PPIH, SNU13, EFTUD2, SART1 and USP39, plus LSM2, LSM3, LSM4, LSM5, LSM6, LSM7 and LSM8. Component of the minor spliceosome, which splices U12-type introns. Part of the SMN-Sm complex that contains SMN1, GEMIN2/SIP1, DDX20/GEMIN3, GEMIN4, GEMIN5, GEMIN6, GEMIN7, GEMIN8, STRAP/UNRIP and the Sm proteins SNRPB, SNRPD1, SNRPD2, SNRPD3, SNRPE, SNRPF and SNRPG; catalyzes core snRNPs assembly. Forms a 6S pICln-Sm complex composed of CLNS1A/pICln, SNRPD1, SNRPD2, SNRPE, SNRPF and SNRPG; ring-like structure where CLNS1A/pICln mimics additional Sm proteins and which is unable to assemble into the core snRNP. Interacts with SMN1; the interaction is direct. Interacts with GEMIN2; the interaction is direct. Interacts with SNRPD1; the interaction is direct. Interacts with SNRPF; the interaction is direct.

Its subcellular location is the cytoplasm. It is found in the cytosol. The protein resides in the nucleus. Plays a role in pre-mRNA splicing as a core component of the spliceosomal U1, U2, U4 and U5 small nuclear ribonucleoproteins (snRNPs), the building blocks of the spliceosome. Component of both the pre-catalytic spliceosome B complex and activated spliceosome C complexes. As a component of the minor spliceosome, involved in the splicing of U12-type introns in pre-mRNAs. The protein is Small nuclear ribonucleoprotein Sm D2 (SNRPD2) of Homo sapiens (Human).